Reading from the N-terminus, the 54-residue chain is Lectin alpha-1 chain (54 aa).

The protein belongs to the leguminous lectin family. Tetramer of two alpha and two beta chains.

This chain is Lectin alpha-1 chain, found in Lathyrus cicera (Flat-pod pea).